The sequence spans 257 residues: UPF0246 protein BT_3869 (257 aa).

This sequence belongs to the UPF0246 family.

This is UPF0246 protein BT_3869 from Bacteroides thetaiotaomicron (strain ATCC 29148 / DSM 2079 / JCM 5827 / CCUG 10774 / NCTC 10582 / VPI-5482 / E50).